Reading from the N-terminus, the 172-residue chain is 6,7-dimethyl-8-ribityllumazine synthase (172 aa).

Residues F22 and A56–E58 contribute to the 5-amino-6-(D-ribitylamino)uracil site. L78 to G79 provides a ligand contact to (2S)-2-hydroxy-3-oxobutyl phosphate. A80–I82 serves as a coordination point for 5-amino-6-(D-ribitylamino)uracil. H88 functions as the Proton donor in the catalytic mechanism. 5-amino-6-(D-ribitylamino)uracil is bound at residue F113. Residue R127 coordinates (2S)-2-hydroxy-3-oxobutyl phosphate.

The protein belongs to the DMRL synthase family.

It carries out the reaction (2S)-2-hydroxy-3-oxobutyl phosphate + 5-amino-6-(D-ribitylamino)uracil = 6,7-dimethyl-8-(1-D-ribityl)lumazine + phosphate + 2 H2O + H(+). The protein operates within cofactor biosynthesis; riboflavin biosynthesis; riboflavin from 2-hydroxy-3-oxobutyl phosphate and 5-amino-6-(D-ribitylamino)uracil: step 1/2. Its function is as follows. Catalyzes the formation of 6,7-dimethyl-8-ribityllumazine by condensation of 5-amino-6-(D-ribitylamino)uracil with 3,4-dihydroxy-2-butanone 4-phosphate. This is the penultimate step in the biosynthesis of riboflavin. The chain is 6,7-dimethyl-8-ribityllumazine synthase from Protochlamydia amoebophila (strain UWE25).